We begin with the raw amino-acid sequence, 357 residues long: Enoyl-[acyl-carrier-protein] reductase, mitochondrial (357 aa).

The N-terminal 19 residues, 1–19, are a transit peptide targeting the mitochondrion; the sequence is MLRRGFLSRINAAQWSRQM. Positions 36–352 constitute an Enoyl reductase (ER) domain; it reads EVLQLVEDKL…FKGFTGKKYI (317 aa). Y74 (proton donor) is an active-site residue. Residues N147, 173–176, 196–198, 264–267, 289–291, K349, and K350 each bind NADP(+); these read NSAV, RDR, YGGM, and FWM.

It belongs to the zinc-containing alcohol dehydrogenase family. Quinone oxidoreductase subfamily. As to quaternary structure, homodimer. As to expression, expressed in the central nervous system.

The protein localises to the mitochondrion. It carries out the reaction a 2,3-saturated acyl-[ACP] + NADP(+) = a (2E)-enoyl-[ACP] + NADPH + H(+). Functionally, catalyzes the NADPH-dependent reduction of trans-2-enoyl thioesters in mitochondrial fatty acid synthesis (fatty acid synthesis type II). Fatty acid chain elongation in mitochondria uses acyl carrier protein (ACP) as an acyl group carrier, but the enzyme accepts both ACP and CoA thioesters as substrates in vitro. Involved in iron homeostasis; affecting Fe-S cluster assembly and ceramide metabolism. Required for proper morphology and bioenergetic functions of mitochondria. Required for maintenance of neurons, including photoreceptor neurons. In Drosophila melanogaster (Fruit fly), this protein is Enoyl-[acyl-carrier-protein] reductase, mitochondrial.